Consider the following 1168-residue polypeptide: Probable serine/threonine protein kinase IRE (1168 aa).

Disordered stretches follow at residues methionine 1 to serine 165 and glutamate 377 to proline 444. The span at proline 16–threonine 25 shows a compositional bias: low complexity. 2 stretches are compositionally biased toward basic and acidic residues: residues arginine 39 to glutamate 54 and glutamine 107 to alanine 130. Polar residues-rich tracts occupy residues glutamine 146 to valine 163 and threonine 401 to methionine 414. The segment at cysteine 488–cysteine 507 adopts a C2H2-type; atypical zinc-finger fold. Disordered stretches follow at residues proline 546 to glutamate 566, glycine 602 to serine 622, and serine 717 to arginine 744. Positions phenylalanine 754–phenylalanine 1043 constitute a Protein kinase domain. Residues isoleucine 760 to valine 768 and lysine 783 contribute to the ATP site. Aspartate 877 acts as the Proton acceptor in catalysis. Residues lysine 1044–asparagine 1144 enclose the AGC-kinase C-terminal domain.

The protein belongs to the protein kinase superfamily. AGC Ser/Thr protein kinase family. Highly expressed in roots, elongating root hair cells and pollen grains.

The enzyme catalyses L-seryl-[protein] + ATP = O-phospho-L-seryl-[protein] + ADP + H(+). It carries out the reaction L-threonyl-[protein] + ATP = O-phospho-L-threonyl-[protein] + ADP + H(+). Functionally, modulates root tip growth. May play a common role in the tip growth of plant cells. This Arabidopsis thaliana (Mouse-ear cress) protein is Probable serine/threonine protein kinase IRE.